We begin with the raw amino-acid sequence, 21 residues long: Misgurin (21 aa).

The interval 1–21 is disordered; the sequence is RQRVEELSKFSKKGAAARRRK. Residues 10–21 are compositionally biased toward basic residues; it reads FSKKGAAARRRK.

It localises to the secreted. In terms of biological role, strong antimicrobial activity against several Gram-positive and Gram-negative bacteria and fungi. This is Misgurin from Misgurnus anguillicaudatus (Oriental weatherloach).